The primary structure comprises 237 residues: tRNA (guanine-N(7)-)-methyltransferase (237 aa).

Residues aspartate 35, glutamate 60, asparagine 87, and aspartate 113 each coordinate S-adenosyl-L-methionine. Aspartate 113 is an active-site residue. 2 residues coordinate substrate: lysine 117 and aspartate 149.

It belongs to the class I-like SAM-binding methyltransferase superfamily. TrmB family.

It carries out the reaction guanosine(46) in tRNA + S-adenosyl-L-methionine = N(7)-methylguanosine(46) in tRNA + S-adenosyl-L-homocysteine. It functions in the pathway tRNA modification; N(7)-methylguanine-tRNA biosynthesis. Catalyzes the formation of N(7)-methylguanine at position 46 (m7G46) in tRNA. This is tRNA (guanine-N(7)-)-methyltransferase from Synechococcus sp. (strain CC9311).